The following is a 281-amino-acid chain: Tetraspanin-33 (281 aa).

Residues 1–23 are Cytoplasmic-facing; it reads MGNAKRATQNDEDYTFVSPVVKY. The helical transmembrane segment at 24 to 44 threads the bilayer; the sequence is LLFFFNMIFWIISLVLISIGV. Residues 45–62 lie on the Extracellular side of the membrane; that stretch reads YSRIVKHETALACLTVDP. Residues 63–83 traverse the membrane as a helical segment; it reads ALILMVVGILMFFITFCGCVG. The Cytoplasmic portion of the chain corresponds to 84 to 94; the sequence is SLRENICLLQT. A helical membrane pass occupies residues 95-115; the sequence is FCIFLTIMFLLQLLAGVLGFV. At 116–233 the chain is on the extracellular side; sequence FSDKARGKVT…DILVNWIHSN (118 aa). Disulfide bonds link Cys-154/Cys-222, Cys-155/Cys-187, Cys-171/Cys-181, and Cys-188/Cys-201. Asn-170 carries an N-linked (GlcNAc...) asparagine glycan. Residues 234 to 254 form a helical membrane-spanning segment; it reads LFLLGGIALGLTIPQLVGILL. Residues 255 to 281 are Cytoplasmic-facing; that stretch reads SQVLINQIQDQIKLQNYNQQHRSDPWS.

This sequence belongs to the tetraspanin (TM4SF) family. As to quaternary structure, homodimer; disulfide-linked.

The protein localises to the cell membrane. It is found in the cell junction. The protein resides in the adherens junction. It localises to the cytoplasm. Its function is as follows. Part of TspanC8 subgroup, composed of 6 members that interact with the transmembrane metalloprotease ADAM10. This interaction is required for ADAM10 exit from the endoplasmic reticulum and for enzymatic maturation and trafficking to the cell surface as well as substrate specificity. Different TspanC8/ADAM10 complexes have distinct substrates. The sequence is that of Tetraspanin-33 (tspan33) from Danio rerio (Zebrafish).